A 212-amino-acid chain; its full sequence is 3-demethoxyubiquinol 3-hydroxylase (212 aa).

The segment covering 1–14 (MTSPSSRTPRGSTP) has biased composition (low complexity). A disordered region spans residues 1–22 (MTSPSSRTPRGSTPPFEPSADE). The Fe cation site is built by Glu-58, Glu-89, His-92, Glu-141, Glu-173, and His-176.

Belongs to the COQ7 family. Requires Fe cation as cofactor.

It localises to the cell membrane. The catalysed reaction is a 5-methoxy-2-methyl-3-(all-trans-polyprenyl)benzene-1,4-diol + AH2 + O2 = a 3-demethylubiquinol + A + H2O. It participates in cofactor biosynthesis; ubiquinone biosynthesis. In terms of biological role, catalyzes the hydroxylation of 2-nonaprenyl-3-methyl-6-methoxy-1,4-benzoquinol during ubiquinone biosynthesis. The polypeptide is 3-demethoxyubiquinol 3-hydroxylase (Rhodospirillum rubrum (strain ATCC 11170 / ATH 1.1.1 / DSM 467 / LMG 4362 / NCIMB 8255 / S1)).